The chain runs to 149 residues: Calmodulin-2 (149 aa).

Position 2 is an N-acetylalanine (A2). EF-hand domains follow at residues 8–43 (EQIA…LGQN), 44–79 (PTEA…KMKD), 81–116 (DSEE…LGEK), and 117–149 (LTDE…MMAK). Ca(2+)-binding residues include D21, D23, D25, C27, E32, D57, D59, N61, T63, E68, D94, D96, N98, and E105. An N6,N6,N6-trimethyllysine modification is found at K116. 5 residues coordinate Ca(2+): D130, D132, D134, Q136, and E141.

This sequence belongs to the calmodulin family.

Calmodulin mediates the control of a large number of enzymes, ion channels and other proteins by Ca(2+). Among the enzymes to be stimulated by the calmodulin-Ca(2+) complex are a number of protein kinases and phosphatases. The chain is Calmodulin-2 (CAM2) from Oryza sativa subsp. indica (Rice).